A 297-amino-acid polypeptide reads, in one-letter code: Quinate/shikimate dehydrogenase (297 aa).

Residues lysine 80 and aspartate 116 each contribute to the substrate site. Residues 141–144 (AGGA), 164–167 (NRRD), lysine 214, 241–244 (CVYN), and glycine 264 contribute to the NAD(+) site.

It belongs to the shikimate dehydrogenase family. In terms of assembly, homodimer.

The catalysed reaction is L-quinate + NAD(+) = 3-dehydroquinate + NADH + H(+). The enzyme catalyses L-quinate + NADP(+) = 3-dehydroquinate + NADPH + H(+). It catalyses the reaction shikimate + NADP(+) = 3-dehydroshikimate + NADPH + H(+). It carries out the reaction shikimate + NAD(+) = 3-dehydroshikimate + NADH + H(+). The protein operates within metabolic intermediate biosynthesis; chorismate biosynthesis; chorismate from D-erythrose 4-phosphate and phosphoenolpyruvate: step 4/7. The actual biological function of YdiB remains unclear, nor is it known whether 3-dehydroshikimate or quinate represents the natural substrate. Catalyzes the reversible NAD-dependent reduction of both 3-dehydroshikimate (DHSA) and 3-dehydroquinate to yield shikimate (SA) and quinate, respectively. It can use both NAD or NADP for catalysis, however it has higher catalytic efficiency with NAD. The chain is Quinate/shikimate dehydrogenase from Shigella dysenteriae serotype 1 (strain Sd197).